A 427-amino-acid polypeptide reads, in one-letter code: Heterogeneous nuclear ribonucleoprotein K (427 aa).

The disordered stretch occupies residues 1 to 34; the sequence is METEQQEETFTNTETNGKRPAEDMEEEQAFKRSR. Positions 16–34 are enriched in basic and acidic residues; sequence NGKRPAEDMEEEQAFKRSR. 2 KH domains span residues 39-101 and 117-182; these read MVEL…LKKI and DCEL…IKII. 2 tandem repeats follow at residues 51–73 and 56–59. Residues 51–385 form a 2 X 22 AA approximate repeats region; that stretch reads AGAVIGKGGK…QIRHESGASI (335 aa). A 5 X 4 AA repeats of G-X-G-G region spans residues 56-371; it reads GKGGKNIKAL…LAGSIIGKGG (316 aa). Residues 209–246 form an RNA-binding RGG-box region; the sequence is YGGFTMMFDDRRGRPVGFPMRGRGGFDRMPPNRGGRPM. 3 tandem repeats follow at residues 218–223, 230–233, and 240–243. The 2 X 6 AA approximate repeats stretch occupies residues 218–302; the sequence is DRRGRPVGFP…LMSYDRRGRP (85 aa). Residues 221–305 form a disordered region; it reads GRPVGFPMRG…YDRRGRPGDR (85 aa). The span at 249–258 shows a compositional bias: basic and acidic residues; the sequence is SRRDYDDMSP. 4 tandem repeats follow at residues 268–271, 297–302, 363–385, and 368–371. Positions 295–305 are enriched in basic and acidic residues; the sequence is SYDRRGRPGDR. The KH 3 domain occupies 351 to 415; the sequence is IITTQVTIPK…DQIQNAQYLL (65 aa).

The protein resides in the cytoplasm. Its subcellular location is the nucleus. It localises to the nucleoplasm. In terms of biological role, one of the major pre-mRNA-binding proteins. Binds tenaciously to poly(C) sequences. Likely to play a role in the nuclear metabolism of hnRNAs, particularly for pre-mRNAs that contain cytidine-rich sequences. Can also bind poly(C) single-stranded DNA. May play an important role in p53/TP53 response to DNA damage, acting at the level of both transcription activation and repression. As part of a ribonucleoprotein complex, may negatively regulate the transcription of genes involved in neuronal differentiation. The polypeptide is Heterogeneous nuclear ribonucleoprotein K (HNRNPK) (Gallus gallus (Chicken)).